Consider the following 125-residue polypeptide: MIWQGRSRRKPSGGFYRKARKKRKYELGREQVETLIGERKVKKIRVRGGNYKLKLFADKYANVYDPKQGKVVRVEIESVVENPAHVHYARRNVITKGAIIATSIGKARVTNRPSQEGVVNAVLIE.

Residues 1-20 (MIWQGRSRRKPSGGFYRKAR) are disordered.

It belongs to the eukaryotic ribosomal protein eS8 family. As to quaternary structure, part of the 30S ribosomal subunit.

The sequence is that of Small ribosomal subunit protein eS8 (rps8e) from Archaeoglobus fulgidus (strain ATCC 49558 / DSM 4304 / JCM 9628 / NBRC 100126 / VC-16).